The chain runs to 535 residues: Alpha-1,3-mannosyl-glycoprotein 4-beta-N-acetylglucosaminyltransferase A (535 aa).

The Cytoplasmic portion of the chain corresponds to 1-6; sequence MRLRNG. Residues 7-27 form a helical; Signal-anchor for type II membrane protein membrane-spanning segment; sequence TVATVLAFITSFLTLSWYTTW. The Lumenal portion of the chain corresponds to 28-535; that stretch reads QNGKEKVIAY…NEIHIKKVTN (508 aa). The stretch at 31–57 forms a coiled coil; sequence KEKVIAYQREFLALKERLRIAEHRISQ. Residues Asn-77 and Asn-458 are each glycosylated (N-linked (GlcNAc...) asparagine). Ser-474 is subject to Phosphoserine.

The protein belongs to the glycosyltransferase 54 family. A divalent metal cation is required as a cofactor. In terms of processing, N-glycosylated. In terms of tissue distribution, highly expressed in small intestine, kidney, lung and spleen. Weakly expressed in brain, heart and liver.

It localises to the golgi apparatus membrane. It is found in the secreted. It catalyses the reaction N(4)-{beta-D-GlcNAc-(1-&gt;2)-alpha-D-Man-(1-&gt;3)-[beta-D-GlcNAc-(1-&gt;2)-alpha-D-Man-(1-&gt;6)]-beta-D-Man-(1-&gt;4)-beta-D-GlcNAc-(1-&gt;4)-beta-D-GlcNAc}-L-asparaginyl-[protein] + UDP-N-acetyl-alpha-D-glucosamine = N(4)-{beta-D-GlcNAc-(1-&gt;2)-[beta-D-GlcNAc-(1-&gt;4)]-alpha-D-Man-(1-&gt;3)-[beta-D-GlcNAc-(1-&gt;2)-alpha-D-Man-(1-&gt;6)]-beta-D-Man-(1-&gt;4)-beta-D-GlcNAc-(1-&gt;4)-beta-D-GlcNAc}-L-asparaginyl-[protein] + UDP + H(+). It carries out the reaction an N(4)-{beta-D-GlcNAc-(1-&gt;2)-alpha-D-Man-(1-&gt;3)-[alpha-D-Man-(1-&gt;6)]-beta-D-Man-(1-&gt;4)-beta-D-GlcNAc-(1-&gt;4)-beta-D-GlcNAc}-L-asparaginyl-[protein] + UDP-N-acetyl-alpha-D-glucosamine = an N(4)-{beta-D-GlcNAc-(1-&gt;2)-[beta-D-GlcNAc-(1-&gt;4)]-alpha-D-Man-(1-&gt;3)-[alpha-D-Man-(1-&gt;6)]-beta-D-Man-(1-&gt;4)-beta-D-GlcNAc-(1-&gt;4)-beta-D-GlcNAc}-L-asparaginyl-[protein] + UDP + H(+). The catalysed reaction is an N(4)-{beta-D-GlcNAc-(1-&gt;2)-alpha-D-Man-(1-&gt;3)-[beta-D-GlcNAc-(1-&gt;2)-[beta-D-GlcNAc-(1-&gt;6)]-alpha-D-Man-(1-&gt;6)]-beta-D-Man-(1-&gt;4)-beta-D-GlcNAc-(1-&gt;4)-beta-D-GlcNAc}-L-asparaginyl-[protein] + UDP-N-acetyl-alpha-D-glucosamine = an N(4)-{beta-D-GlcNAc-(1-&gt;2)-[beta-D-GlcNAc-(1-&gt;4)]-alpha-D-Man-(1-&gt;3)-[beta-D-GlcNAc-(1-&gt;2)-[beta-D-GlcNAc-(1-&gt;6)]-alpha-D-Man-(1-&gt;6)]-beta-D-Man-(1-&gt;4)-beta-D-GlcNAc-(1-&gt;4)-beta-D-GlcNAc}-L-asparaginyl-[protein] + UDP + H(+). The enzyme catalyses an N(4)-{beta-D-GlcNAc-(1-&gt;2)-alpha-D-Man-(1-&gt;3)-[beta-D-GlcNAc-(1-&gt;2)-alpha-D-Man-(1-&gt;6)]-beta-D-Man-(1-&gt;4)-beta-D-GlcNAc-(1-&gt;4)-[alpha-L-Fuc-(1-&gt;6)]-beta-D-GlcNAc}-L-asparaginyl-[protein] + UDP-N-acetyl-alpha-D-glucosamine = N(4)-{beta-D-GlcNAc-(1-&gt;2)-[beta-D-GlcNAc-(1-&gt;4)]-alpha-D-Man-(1-&gt;3)-[beta-D-GlcNAc-(1-&gt;2)-alpha-D-Man-(1-&gt;6)]-beta-D-Man-(1-&gt;4)-beta-D-GlcNAc-(1-&gt;4)-[alpha-L-Fuc-(1-&gt;6)]-beta-D-GlcNAc}-asparaginyl-[protein] + UDP + H(+). It catalyses the reaction an N(4)-{beta-D-GlcNAc-(1-&gt;2)-alpha-D-Man-(1-&gt;3)-[beta-D-Gal-(1-&gt;4)-beta-D-GlcNAc-(1-&gt;2)-alpha-D-Man-(1-&gt;6)]-beta-D-Man-(1-&gt;4)-beta-D-GlcNAc-(1-&gt;4)-beta-D-GlcNAc}-L-asparaginyl-[protein] + UDP-N-acetyl-alpha-D-glucosamine = an N(4)-{beta-D-GlcNAc-(1-&gt;2)-[beta-D-GlcNAc-(1-&gt;4)]-alpha-D-Man-(1-&gt;3)-[beta-D-Gal-(1-&gt;4)-beta-D-GlcNAc-(1-&gt;2)-alpha-D-Man-(1-&gt;6)]-beta-D-Man-(1-&gt;4)-beta-D-GlcNAc-(1-&gt;4)-beta-D-GlcNAc}-L-asparaginyl-[protein] + UDP + H(+). It carries out the reaction N(4)-{beta-D-GlcNAc-(1-&gt;2)-alpha-D-Man-(1-&gt;3)-[alpha-D-Man-(1-&gt;3)-{alpha-D-Man-(1-&gt;6)}-alpha-D-Man-(1-&gt;6)]-beta-D-Man-(1-&gt;4)-beta-D-GlcNAc-(1-&gt;4)-beta-D-GlcNAc}-asparaginyl-[protein] + UDP-N-acetyl-alpha-D-glucosamine = N(4)-{beta-D-GlcNAc-(1-&gt;2)-[beta-D-GlcNAc-(1-&gt;4)]-alpha-D-Man-(1-&gt;3)-[alpha-D-Man-(1-&gt;3)-{alpha-D-Man-(1-&gt;6)}-alpha-D-Man-(1-&gt;6)]-beta-D-Man-(1-&gt;4)-beta-D-GlcNAc-(1-&gt;4)-beta-D-GlcNAc}-asparaginyl-[protein] + UDP + H(+). The catalysed reaction is N(4)-{beta-D-GlcNAc-(1-&gt;2)-alpha-D-Man-(1-&gt;3)-beta-D-Man-(1-&gt;4)-beta-D-GlcNAc-(1-&gt;4)-beta-D-GlcNAc}-asparaginyl-[protein] + UDP-N-acetyl-alpha-D-glucosamine = N(4)-{beta-D-GlcNAc-(1-&gt;2)-[beta-D-GlcNAc-(1-&gt;4)]-alpha-D-Man-(1-&gt;3)-beta-D-Man-(1-&gt;4)-beta-D-GlcNAc-(1-&gt;4)-beta-D-GlcNAc}-asparaginyl-[protein] + UDP + H(+). It functions in the pathway protein modification; protein glycosylation. With respect to regulation, inhibited by UDP. In terms of biological role, glycosyltransferase that catalyze the transfer of GlcNAc from UDP-GlcNAc to the GlcNAcbeta1-2Manalpha1-3 arm of the core structure of N-linked glycans through a beta1-4 linkage and participates in the production of tri- and tetra-antennary N-linked sugar chains. Involved in glucose transport by mediating SLC2A2/GLUT2 glycosylation, thereby controlling cell-surface expression of SLC2A2 in pancreatic beta cells. The protein is Alpha-1,3-mannosyl-glycoprotein 4-beta-N-acetylglucosaminyltransferase A of Bos taurus (Bovine).